The following is a 545-amino-acid chain: CTP synthase (545 aa).

The segment at 1-266 (MTTNYIFVTG…DDYICKRFSL (266 aa)) is amidoligase domain. A CTP-binding site is contributed by S14. Position 14 (S14) interacts with UTP. Residues 15–20 (SLGKGI) and D72 contribute to the ATP site. Positions 72 and 140 each coordinate Mg(2+). CTP is bound by residues 147-149 (DIE), 187-192 (KTKPTQ), and K223. Residues 187-192 (KTKPTQ) and K223 each bind UTP. 239–241 (KDI) serves as a coordination point for ATP. Residues 291–542 (TIGMVGKYVA…VKAAGAYQKR (252 aa)) enclose the Glutamine amidotransferase type-1 domain. Position 352 (G352) interacts with L-glutamine. C379 serves as the catalytic Nucleophile; for glutamine hydrolysis. Residues 380 to 383 (LGMQ), E403, and R470 each bind L-glutamine. Active-site residues include H515 and E517.

It belongs to the CTP synthase family. In terms of assembly, homotetramer.

It catalyses the reaction UTP + L-glutamine + ATP + H2O = CTP + L-glutamate + ADP + phosphate + 2 H(+). The catalysed reaction is L-glutamine + H2O = L-glutamate + NH4(+). It carries out the reaction UTP + NH4(+) + ATP = CTP + ADP + phosphate + 2 H(+). It functions in the pathway pyrimidine metabolism; CTP biosynthesis via de novo pathway; CTP from UDP: step 2/2. Allosterically activated by GTP, when glutamine is the substrate; GTP has no effect on the reaction when ammonia is the substrate. The allosteric effector GTP functions by stabilizing the protein conformation that binds the tetrahedral intermediate(s) formed during glutamine hydrolysis. Inhibited by the product CTP, via allosteric rather than competitive inhibition. In terms of biological role, catalyzes the ATP-dependent amination of UTP to CTP with either L-glutamine or ammonia as the source of nitrogen. Regulates intracellular CTP levels through interactions with the four ribonucleotide triphosphates. This is CTP synthase from Pectobacterium atrosepticum (strain SCRI 1043 / ATCC BAA-672) (Erwinia carotovora subsp. atroseptica).